Consider the following 133-residue polypeptide: Small ribosomal subunit protein eS24 (133 aa).

Position 1 is an N-acetylmethionine (methionine 1). Residue threonine 9 is modified to Phosphothreonine. Lysine 37 participates in a covalent cross-link: Glycyl lysine isopeptide (Lys-Gly) (interchain with G-Cter in SUMO2). Positions 92-133 (ARHGLYEKKKTSRKQRKERKNRMKKVRGTAKANVGAGKKPKE) are disordered. A compositionally biased stretch (basic residues) spans 101-119 (KTSRKQRKERKNRMKKVRG).

The protein belongs to the eukaryotic ribosomal protein eS24 family. Component of the small ribosomal subunit. Part of the small subunit (SSU) processome, composed of more than 70 proteins and the RNA chaperone small nucleolar RNA (snoRNA) U3.

It is found in the cytoplasm. The protein resides in the nucleus. It localises to the nucleolus. Its function is as follows. Component of the small ribosomal subunit. The ribosome is a large ribonucleoprotein complex responsible for the synthesis of proteins in the cell. Required for processing of pre-rRNA and maturation of 40S ribosomal subunits. Part of the small subunit (SSU) processome, first precursor of the small eukaryotic ribosomal subunit. During the assembly of the SSU processome in the nucleolus, many ribosome biogenesis factors, an RNA chaperone and ribosomal proteins associate with the nascent pre-rRNA and work in concert to generate RNA folding, modifications, rearrangements and cleavage as well as targeted degradation of pre-ribosomal RNA by the RNA exosome. This chain is Small ribosomal subunit protein eS24 (RPS24), found in Oryctolagus cuniculus (Rabbit).